A 1165-amino-acid polypeptide reads, in one-letter code: Leptin receptor (1165 aa).

Positions 1 to 21 (MTCPKFSVALLHWEFIYVITA) are cleaved as a signal peptide. The Extracellular portion of the chain corresponds to 22–838 (FDLAYPITPW…TQDGEKHRND (817 aa)). 5 cysteine pairs are disulfide-bonded: C37–C90, C89–C99, C131–C142, C186–C196, and C188–C193. Residues N41, N55, N72, N80, and N98 are each glycosylated (N-linked (GlcNAc...) asparagine). N-linked (GlcNAc...) asparagine glycosylation is present at N187. N-linked (GlcNAc...) asparagine glycosylation is found at N206, N276, N347, and N397. The Fibronectin type-III 1 domain occupies 239-332 (PPLGLHMEIT…STPFTFTTQD (94 aa)). 2 cysteine pairs are disulfide-bonded: C352–C412 and C413–C418. Residue N433 is glycosylated (N-linked (GlcNAc...) asparagine). 3 disulfides stabilise this stretch: C436–C447, C473–C528, and C488–C498. The interval 467–484 (HRSSLYCSDVPSVHPISE) is leptin-binding. Fibronectin type-III domains lie at 539-634 (PPSS…TVVT), 642-736 (GPEF…WPMS), and 740-834 (IVQS…DGEK). The WSXWS motif motif lies at 622-626 (WSNWS). N624, N659, N670, N697, N728, and N750 each carry an N-linked (GlcNAc...) asparagine glycan. A helical membrane pass occupies residues 839 to 861 (AGLYVIVPIIISSSILLLGTLLM). At 862–1165 (SHQRMKKLFW…MENKMYDLTV (304 aa)) the chain is on the cytoplasmic side. The short motif at 870–878 (FWEDVPNPK) is the Box 1 motif element. S881 carries the post-translational modification Phosphoserine. A required for JAK2 activation region spans residues 892–897 (ETFEHL). The segment at 897–905 (LFIKHTESV) is required for STAT3 phosphorylation. Y986 is modified (phosphotyrosine; by JAK2). Y1079 carries the phosphotyrosine modification. Position 1141 is a phosphotyrosine; by JAK2 (Y1141).

Belongs to the type I cytokine receptor family. Type 2 subfamily. Present as a mixture of monomers and dimers. The phosphorylated receptor binds a number of SH2 domain-containing proteins such as JAK2, STAT3, PTPN11, and SOCS3. Interaction with SOCS3 inhibits JAK/STAT signaling and MAPK cascade. On ligand binding, phosphorylated on two conserved C-terminal tyrosine residues by JAK2. Tyr-986 is required for complete binding and activation of PTPN11, ERK/FOS activation,for interaction with SOCS3 and SOCS3 mediated inhibition of leptin signaling. Phosphorylation on Tyr-1141 is required for STAT3 binding/activation. Phosphorylation of Tyr-1079 has a more accessory role. Kidney, liver, spleen, lung, brain, testis, uterus, ovary, corpus luteum, theca and granulosa cells.

It is found in the cell membrane. The protein resides in the basolateral cell membrane. Receptor for hormone LEP/leptin. On ligand binding, mediates LEP central and peripheral effects through the activation of different signaling pathways such as JAK2/STAT3 and MAPK cascade/FOS. In the hypothalamus, LEP acts as an appetite-regulating factor that induces a decrease in food intake and an increase in energy consumption by inducing anorexinogenic factors and suppressing orexigenic neuropeptides, also regulates bone mass and secretion of hypothalamo-pituitary-adrenal hormones. In the periphery, increases basal metabolism, influences reproductive function, regulates pancreatic beta-cell function and insulin secretion, is pro-angiogenic and affects innate and adaptive immunity. Control of energy homeostasis and melanocortin production (stimulation of POMC and full repression of AgRP transcription) is mediated by STAT3 signaling, whereas distinct signals regulate NPY and the control of fertility, growth and glucose homeostasis. Involved in the regulation of counter-regulatory response to hypoglycemia by inhibiting neurons of the parabrachial nucleus. Has a specific effect on T lymphocyte responses, differentially regulating the proliferation of naive and memory T-cells. Leptin increases Th1 and suppresses Th2 cytokine production. The chain is Leptin receptor (LEPR) from Sus scrofa (Pig).